A 104-amino-acid chain; its full sequence is NADH-quinone oxidoreductase subunit K (104 aa).

The next 3 membrane-spanning stretches (helical) occupy residues 4–24, 31–51, and 67–87; these read VPAS…LFGA, VIVL…LVAF, and LFTM…LIAL.

The protein belongs to the complex I subunit 4L family. As to quaternary structure, NDH-1 is composed of 14 different subunits. Subunits NuoA, H, J, K, L, M, N constitute the membrane sector of the complex.

The protein resides in the cell membrane. The catalysed reaction is a quinone + NADH + 5 H(+)(in) = a quinol + NAD(+) + 4 H(+)(out). In terms of biological role, NDH-1 shuttles electrons from NADH, via FMN and iron-sulfur (Fe-S) centers, to quinones in the respiratory chain. The immediate electron acceptor for the enzyme in this species is believed to be a menaquinone. Couples the redox reaction to proton translocation (for every two electrons transferred, four hydrogen ions are translocated across the cytoplasmic membrane), and thus conserves the redox energy in a proton gradient. This chain is NADH-quinone oxidoreductase subunit K, found in Bacillus cereus (strain Q1).